The following is a 409-amino-acid chain: FAD-dependent monooxygenase phnB (409 aa).

Residues E35, A50, R110, and D311 each contribute to the FAD site.

Belongs to the paxM FAD-dependent monooxygenase family. Requires FAD as cofactor.

It catalyses the reaction 3,6,7,9-tetrahydroxy-3-methyl-2,3-dihydro-1H-naphtho[2,1-b]pyran-1-one + NADPH + O2 + H(+) = 2,3,4,7,9-pentahydroxy-6-methyl-1H-phenalen-1-one + NADP(+) + 2 H2O. The protein operates within secondary metabolite biosynthesis. Its function is as follows. FAD-dependent monooxygenase; part of the gene cluster that mediates the biosynthesis of phenalenones such as herqueinone, compounds that have been reported to treat tumors, bacterial infections and/or mycoses, and rheumatic diseases. The non-reducing polyketide synthase phnA synthesizes the heptaketide backbone and cyclizes it into the angular, hemiketal-containing naphtho-gamma-pyrone prephenalenone. The product template (PT) domain of phnA catalyzes only the C4-C9 aldol condensation, which is unprecedented among known PT domains. The transformation of prephenalenone to phenalenones requires an FAD-dependent monooxygenase phnB, which catalyzes the C2 aromatic hydroxylation of prephenalenone and ring opening of the gamma-pyrone ring simultaneously. Subsequent intramolecular deprotonation of C3 phenolic oxygen accelerates phenalenone ring closure to yield the tricyclic phenalenone core with a C2 hydroxylation. The prenyltransferase phnF further catalyzes reverse C-prenylation of phenalenone by direct electrophilic substitution at C6, or possibly via first a forward O-prenylation of a neighboring phenol in phenalenone, followed by a Claisen rearrangement. The hydroalkoxylation enzyme phnH catalyzes the 5-exo-trig cyclization via acid catalysis after the spontaneous deprotonation of 7-OH, which leads to the formation of the dihydrobenzofuran atrovenetin. Atrovenetin is further converted to deoxyherqueinone by the O-methyltransferase phnC which can methylate C2-OH to stabilize the northern portion of the phenalenone core. Finally, the oxidoreductase phnG converts deoxyherqueinone to herqueinone via C6 hydroxylation. This chain is FAD-dependent monooxygenase phnB, found in Penicillium herquei.